The chain runs to 472 residues: Putative cytochrome P450 135B1 (472 aa).

Cys-388 provides a ligand contact to heme. The tract at residues 442–472 is disordered; it reads RDVSATSQATAQGAGCPAARGGGPSRAVGSQ. The segment covering 452 to 472 has biased composition (low complexity); the sequence is AQGAGCPAARGGGPSRAVGSQ.

The protein belongs to the cytochrome P450 family. The cofactor is heme.

In Mycobacterium bovis (strain ATCC BAA-935 / AF2122/97), this protein is Putative cytochrome P450 135B1 (cyp135B1).